Consider the following 274-residue polypeptide: Capsid protein (274 aa).

The interval arginine 88–arginine 113 is disordered. Basic and acidic residues predominate over residues glutamine 102–arginine 113.

It localises to the virion. Functionally, capsid protein self-assembles to form a capsid about 33 nm in diameter. The capsid encapsulates two genomic RNAs as well as a third, subgenomic RNA (RNA3) (Potential). In Raspberry bushy dwarf virus (isolate Malling Jewel raspberry/R15) (RBDV), this protein is Capsid protein.